The chain runs to 984 residues: Putative formate dehydrogenase SA2102 (984 aa).

In terms of domain architecture, 2Fe-2S ferredoxin-type spans 3–79 (EHLVVTLDGK…PMTVNTVNND (77 aa)). [2Fe-2S] cluster contacts are provided by Cys37, Cys48, Cys51, and Cys63. Positions 79–119 (DVKDAQKEALDRILEKHMLYCTVCDYNNGDCEIHNTMDAWG) constitute a 4Fe-4S His(Cys)3-ligated-type domain. [4Fe-4S] cluster-binding residues include His95, Cys99, Cys102, Cys109, Cys147, Cys150, Cys153, Cys157, Cys190, Cys193, Cys196, Cys200, Cys264, Cys267, Cys271, and Cys299. 4Fe-4S ferredoxin-type domains are found at residues 138-165 (PFYR…VNET) and 181-211 (NDVP…VNME). The formate dehydrogenase stretch occupies residues 252–984 (MRKERIKKTK…YVFPGNQVDK (733 aa)). One can recognise a 4Fe-4S Mo/W bis-MGD-type domain in the interval 257–313 (IKKTKTVCTYCGVGCSFEVWTKDREILKVQPSHDSPANKIATCVKGKFSWGHINSDQ).

This sequence in the C-terminal section; belongs to the prokaryotic molybdopterin-containing oxidoreductase family. The cofactor is [2Fe-2S] cluster. It depends on [4Fe-4S] cluster as a cofactor. Mo-bis(molybdopterin guanine dinucleotide) serves as cofactor.

The catalysed reaction is formate + NAD(+) = CO2 + NADH. In Staphylococcus aureus (strain N315), this protein is Putative formate dehydrogenase SA2102.